We begin with the raw amino-acid sequence, 229 residues long: 7-cyano-7-deazaguanine synthase (229 aa).

8–18 (FSGGQDSTTCL) is an ATP binding site. Zn(2+) contacts are provided by cysteine 186, cysteine 195, cysteine 198, and cysteine 201.

Belongs to the QueC family. It depends on Zn(2+) as a cofactor.

It carries out the reaction 7-carboxy-7-deazaguanine + NH4(+) + ATP = 7-cyano-7-deazaguanine + ADP + phosphate + H2O + H(+). Its pathway is purine metabolism; 7-cyano-7-deazaguanine biosynthesis. In terms of biological role, catalyzes the ATP-dependent conversion of 7-carboxy-7-deazaguanine (CDG) to 7-cyano-7-deazaguanine (preQ(0)). This is 7-cyano-7-deazaguanine synthase from Edwardsiella ictaluri (strain 93-146).